Here is a 318-residue protein sequence, read N- to C-terminus: Acetyl-coenzyme A carboxylase carboxyl transferase subunit alpha (318 aa).

A CoA carboxyltransferase C-terminal domain is found at 38-292 (ALDRKAEEML…GEAIAAMLGE (255 aa)).

The protein belongs to the AccA family. As to quaternary structure, acetyl-CoA carboxylase is a heterohexamer composed of biotin carboxyl carrier protein (AccB), biotin carboxylase (AccC) and two subunits each of ACCase subunit alpha (AccA) and ACCase subunit beta (AccD).

The protein localises to the cytoplasm. It catalyses the reaction N(6)-carboxybiotinyl-L-lysyl-[protein] + acetyl-CoA = N(6)-biotinyl-L-lysyl-[protein] + malonyl-CoA. Its pathway is lipid metabolism; malonyl-CoA biosynthesis; malonyl-CoA from acetyl-CoA: step 1/1. Component of the acetyl coenzyme A carboxylase (ACC) complex. First, biotin carboxylase catalyzes the carboxylation of biotin on its carrier protein (BCCP) and then the CO(2) group is transferred by the carboxyltransferase to acetyl-CoA to form malonyl-CoA. The polypeptide is Acetyl-coenzyme A carboxylase carboxyl transferase subunit alpha (Paracoccus denitrificans (strain Pd 1222)).